The chain runs to 106 residues: Thioredoxin (106 aa).

Residues 2–106 enclose the Thioredoxin domain; the sequence is VNFLKTKADF…GLREKIKKNK (105 aa). Residues C32 and C35 each act as nucleophile in the active site. An intrachain disulfide couples C32 to C35.

This sequence belongs to the thioredoxin family.

It is found in the cytoplasm. Functionally, participates in various redox reactions through the reversible oxidation of its active center dithiol to a disulfide and catalyzes dithiol-disulfide exchange reactions. In Geodia cydonium (Sponge), this protein is Thioredoxin (THIO).